We begin with the raw amino-acid sequence, 491 residues long: Nucleotidyltransferase MB21D2 (491 aa).

The segment covering 431 to 442 (RGSTTSIPSPQS) has biased composition (polar residues). Residues 431 to 452 (RGSTTSIPSPQSDGGDPNQPDD) are disordered. Threonine 435 is subject to Phosphothreonine. Phosphoserine is present on residues serine 436, serine 439, and serine 442.

The protein belongs to the mab-21 family.

Its function is as follows. Probable nucleotidyltransferase that catalyzes the formation of cyclic dinucleotide second messenger in response to some unknown stimulus. This Homo sapiens (Human) protein is Nucleotidyltransferase MB21D2.